We begin with the raw amino-acid sequence, 302 residues long: uncharacterized protein (302 aa).

Glu48 is an active-site residue.

The protein belongs to the PhzF family.

This is an uncharacterized protein from Clostridium acetobutylicum (strain ATCC 824 / DSM 792 / JCM 1419 / IAM 19013 / LMG 5710 / NBRC 13948 / NRRL B-527 / VKM B-1787 / 2291 / W).